A 159-amino-acid polypeptide reads, in one-letter code: uncharacterized protein (159 aa).

This is an uncharacterized protein from Homo sapiens (Human).